Reading from the N-terminus, the 264-residue chain is 3-methyl-2-oxobutanoate hydroxymethyltransferase (264 aa).

Asp-45 and Asp-84 together coordinate Mg(2+). Residues 45–46, Asp-84, and Lys-112 each bind 3-methyl-2-oxobutanoate; that span reads DS. Glu-114 is a Mg(2+) binding site. The Proton acceptor role is filled by Glu-181.

The protein belongs to the PanB family. Homodecamer; pentamer of dimers. Mg(2+) is required as a cofactor.

Its subcellular location is the cytoplasm. The enzyme catalyses 3-methyl-2-oxobutanoate + (6R)-5,10-methylene-5,6,7,8-tetrahydrofolate + H2O = 2-dehydropantoate + (6S)-5,6,7,8-tetrahydrofolate. It participates in cofactor biosynthesis; (R)-pantothenate biosynthesis; (R)-pantoate from 3-methyl-2-oxobutanoate: step 1/2. In terms of biological role, catalyzes the reversible reaction in which hydroxymethyl group from 5,10-methylenetetrahydrofolate is transferred onto alpha-ketoisovalerate to form ketopantoate. The polypeptide is 3-methyl-2-oxobutanoate hydroxymethyltransferase (Shewanella sp. (strain MR-4)).